We begin with the raw amino-acid sequence, 606 residues long: Gastrula zinc finger protein XlCGF66.1 (606 aa).

2 disordered regions span residues 1–31 (MGMWEEASDTGMKGKKKKKDKNEEEEERGKK) and 240–271 (TLHSKDSCNEGHKHLSHKSDYNKHQNPHKRQK). Basic and acidic residues predominate over residues 242 to 262 (HSKDSCNEGHKHLSHKSDYNK). 11 consecutive C2H2-type zinc fingers follow at residues 273-295 (FSCSKCGKCFSNLTSLHCHQKTH), 300-322 (LLCLKCGKCFATSSKLIIHRQTH), 328-350 (FSCSECRICFSKQSSLARHQITH), 384-407 (DFCSECGKCFATSSQLIAHQQQVH), 413-435 (FSCTKCGKCFSYRSRLVRHQRTH), 441-464 (YSCSECGKCFASSSHLIGHRQQVH), 470-492 (FFCSECGKYFLYQSQLVRHQRTH), 498-521 (YSCSECGKCFATSSQLMAHQQQVH), 527-549 (FSCSECGKYFLYRAHLVRHQRTH), 555-578 (DFCFECGKCFATSLQLIAHQQQVH), and 584-606 (FSCSECGKSFLYRSHLARHHRTH).

Belongs to the krueppel C2H2-type zinc-finger protein family.

It localises to the nucleus. May be involved in transcriptional regulation. The protein is Gastrula zinc finger protein XlCGF66.1 of Xenopus laevis (African clawed frog).